Consider the following 451-residue polypeptide: MMISQFFVLSQRGDNIVFRDYRAEVPKGSTETFFRKVKFWKEDGNAEAPPIFNVDGVNYFHVKVVGLYFVATTRVNVSPSLVLELLQRIARVIKDYLGVLNEDSFRKNFVLVYELLDEVIDFGYVQTTSTEVLKSYIFNEPIVVSPARLQPIDPAAIFTQGAKRMPGTAVTKSVVANDPGGRRREEIFVDIIEKISVTFSSSGYILTSEIDGTIQMKSYLSGNPEIRLALNEDLNIGRGGRSVYDYRSSSGSGVILDDCNFHESVRLDSFDSDRTLSLVPPDGEFPVMNYRMTQEFKPPFHVNTLIEEAGRLKAEVIIKIRAEFPSDIIANTITVQMPLPNYTSRASFELEPGAAGQRTDFKESNKMLEWNLKKIVGGGEHTLRAKLTFSQEFHGNITKEAGPVSMTFTIPMYNVSKLQVKYLQIAKKSSSYNPYRWVRYVTQANSYVARI.

Residues 184-450 (REEIFVDIIE…VTQANSYVAR (267 aa)) form the MHD domain.

Belongs to the adaptor complexes medium subunit family. In terms of assembly, adaptor protein complex 4 (AP-4) is a heterotetramer composed of two large adaptins (epsilon-type subunit and beta-type subunit), a medium adaptin (mu-type subunit) and a small adaptin (sigma-type subunit).

The protein localises to the golgi apparatus. Its subcellular location is the trans-Golgi network. It localises to the membrane. It is found in the coated pit. Its function is as follows. Subunit of novel type of clathrin- or non-clathrin-associated protein coat involved in targeting proteins from the trans-Golgi network (TGN) to the endosomal-lysosomal system. The polypeptide is AP-4 complex subunit mu (AP4M) (Arabidopsis thaliana (Mouse-ear cress)).